The following is a 401-amino-acid chain: MAFLNLFFCLVFISPLMAMPPVLQGRKSISPDSILKDTSTDIGAREFQGRKFPNFMMQLYQNIIRGRDNDLSNLEHPTLQESDTVQSFIAKSYTTVGNRWTLFFDMSSISRSNELKLAELRICLPSFRKSHSVTVDIYHTNDGKEKLFMGSFKTKLSSALDSDCKVFNLTILLQNFLTRGKRLIKDEYIQAKGLHLKDLEKSATEKDTENVDTMKQHQYHVSDFAAERIMLVVFAKEQSHAKPDPPSLGQKLFPSKYGIDDNANKVNGFRRLRRNKKEKTQIHVSTVPPKPIEEIKPECKKVDMFVDFQKIGWGSWIIYPKAYNAYRCESTCAVPQNETENATNHSYIKSLLPLSDMERKECPSCVPMKMMSMSMLYYENEDFILRHHEEMIVEECGFKDM.

A signal peptide spans 1 to 18 (MAFLNLFFCLVFISPLMA). Residues 19–274 (MPPVLQGRKS…KVNGFRRLRR (256 aa)) constitute a propeptide that is removed on maturation. 4 N-linked (GlcNAc...) asparagine glycosylation sites follow: Asn168, Asn337, Asn341, and Asn344. Intrachain disulfides connect Cys299–Cys365 and Cys328–Cys396.

It belongs to the TGF-beta family. In terms of assembly, monomer. The propeptide region interacts with bmp4 in a non-covalent manner. Expressed in the epithelial layer of the Spemann organizer during gastrulation.

The protein localises to the secreted. Functionally, exhibits mesoderm-dorsalizing activity and neural-inducing activity, but lacks mesoderm-inducing activity. Regulates the expression of specific mesodermal and neural genes. Induces convergent extension movements at the embryonic midline by activating the fgf signaling pathway to induce t/bra expression in the organizer region. Acts with wnt11 to induce Spemann organizer cells and induce axis formation. The unprocessed protein antagonizes bmp-signaling. This is Nodal homolog 3-A (nodal3-a) from Xenopus laevis (African clawed frog).